A 759-amino-acid chain; its full sequence is MAEGEDMQTFTSIMDALVRISTSMKNMEKELLCPVCQEMYKQPLVLPCTHNVCQACAREVLGQQGYIGHGGDPSSEPTSPASTPSTRSPRLSRRTLPKPDRLDRLLKSGFGTYPGRKRGALHPQTILFPCPACQGDVELGERGLSGLFRNLTLERVVERYRQSVSVGGAILCQLCKPPPLEATKGCTECRATFCNECFKLFHPWGTQKAQHEPTLPTLSFRPKGLMCPDHKEEVTHYCKTCQRLVCQLCRVRRTHSGHKITPVLSAYQALKDKLTKSLAYILGNQDTVQTQICELEETIRHTEVSGQQAKEEVSQLVRGLGAVLEEKRASLLQAIEECQQERLSRLSAQIHEHQSLLDGSGLVGYAQEVLKETDQPCFVQAAKQLHNRIARATEALQTFRPAASSSFRHCQLDVGREMKLLTELSFLRVPEAPVIDTQRTFAYDQIFLCWRLPPHSPPAWHYTVEFRRTDVPAQPGPTRWQRREEVRGTSALLENPDTGSVYVLRVRGCNKAGYGEYSEDVHLHTPPAPVLHFFLDGRWGASRERLAISKDQRAVRSIPGLPLLLAAERLLTGCHLSVDVVLGDVAVTQGRSYWACAVDPASYLVKVGVGLESKLQESFQGAPDVISPRYDPDSGHDSGAEDAAVEALPPFAFLTIGMGKILLGSGASSNAGLTGRDGPTASCTVPLPPRLGICLDYERGRVSFLDAVSFRGLLECPLDCSGPVCPAFCFIGGGAVQLQEPVGTKPERKVTIGGFAKLD.

The interval 1–166 (MAEGEDMQTF…VERYRQSVSV (166 aa)) is required for proximal axon localization, axon formation and migration. The RING-type 1; degenerate zinc finger occupies 33–59 (CPVCQEMYKQPLVLPCTHNVCQACARE). The segment at 67 to 98 (IGHGGDPSSEPTSPASTPSTRSPRLSRRTLPK) is disordered. Over residues 73–89 (PSSEPTSPASTPSTRSP) the composition is skewed to low complexity. The RING-type 2; degenerate zinc-finger motif lies at 172–231 (CQLCKPPPLEATKGCTECRATFCNECFKLFHPWGTQKAQHEPTLPTLSFRPKGLMCPDHK). The B box-type zinc-finger motif lies at 222–263 (PKGLMCPDHKEEVTHYCKTCQRLVCQLCRVRRTHSGHKITPV). Positions 227, 230, 249, and 255 each coordinate Zn(2+). A coiled-coil region spans residues 322 to 400 (AVLEEKRASL…RATEALQTFR (79 aa)). S330 is subject to Phosphoserine. Residues 370–427 (LKETDQPCFVQAAKQLHNRIARATEALQTFRPAASSSFRHCQLDVGREMKLLTELSFL) form the COS domain. Positions 411–429 (QLDVGREMKLLTELSFLRV) are required for microtubule association, proximal axon localization and axon formation. The Fibronectin type-III domain maps to 429 to 528 (VPEAPVIDTQ…EDVHLHTPPA (100 aa)). The B30.2/SPRY domain maps to 526-747 (PPAPVLHFFL…LQEPVGTKPE (222 aa)). Residue S627 is modified to Phosphoserine.

It belongs to the TRIM/RBCC family. In terms of assembly, interacts with TUBB3 and TUBA4A. In terms of tissue distribution, expressed in the central nervous system, including pyramidal neurons and interneurons in the cortex and hippocampus and all neuronal cell types in the cerebral and cerebellar cortex, and in the peripheral nervous system, including the dorsal root ganglion neurons.

The protein localises to the cell projection. It localises to the axon. The protein resides in the cytoplasm. It is found in the cytoskeleton. Functionally, microtubule-associated protein that is involved in the formation of parallel microtubule bundles linked by cross-bridges in the proximal axon. Required for the uniform orientation and maintenance of the parallel microtubule fascicles, which are important for efficient cargo delivery and trafficking in axons. Thereby also required for proper axon formation, the establishment of neuronal polarity and proper neuronal migration. The polypeptide is Tripartite motif-containing protein 46 (Trim46) (Mus musculus (Mouse)).